Reading from the N-terminus, the 103-residue chain is MKKILLACSSGMSTSLLVTKMKEYAQSIGEEAEIWAVGQDKAKEDMRKADAVLIGPQMSFLKSELQKEADQYNIQVEVIDMMAYGMADGKKAYEQALSLMVNQ.

In terms of domain architecture, PTS EIIB type-3 spans M1–Q103. C8 serves as the catalytic Phosphocysteine intermediate. C8 carries the phosphocysteine; by EIIA modification.

Its subcellular location is the cytoplasm. It carries out the reaction D-cellobiose(out) + N(pros)-phospho-L-histidyl-[protein] = 6-phospho-beta-D-glucosyl-(1-&gt;4)-D-glucose(in) + L-histidyl-[protein]. In terms of biological role, the phosphoenolpyruvate-dependent sugar phosphotransferase system (sugar PTS), a major carbohydrate active transport system, catalyzes the phosphorylation of incoming sugar substrates concomitantly with their translocation across the cell membrane. The enzyme II GmuABC PTS system is involved in the transport of oligo-glucomannans such as cellobiose or mannobiose. This Bacillus subtilis (strain 168) protein is PTS system oligo-beta-mannoside-specific EIIB component.